Consider the following 449-residue polypeptide: DNA-directed RNA polymerase subunit Rpo1C (449 aa).

Residues 1–68 (MQDVIKKIED…EGEELLKAVE (68 aa)) form a unknown region. Positions 69–449 (DEYLRILKVR…TGSVSVIMKK (381 aa)) are DNA-directed RNA polymerase subunit Rpo1C.

The protein belongs to the RNA polymerase beta' chain family. As to quaternary structure, part of the RNA polymerase complex.

The protein resides in the cytoplasm. It carries out the reaction RNA(n) + a ribonucleoside 5'-triphosphate = RNA(n+1) + diphosphate. DNA-dependent RNA polymerase (RNAP) catalyzes the transcription of DNA into RNA using the four ribonucleoside triphosphates as substrates. Forms part of the jaw domain. The protein is DNA-directed RNA polymerase subunit Rpo1C of Methanothermobacter thermautotrophicus (strain Winter) (Methanobacterium thermoautotrophicum).